The primary structure comprises 879 residues: Alanine--tRNA ligase (879 aa).

Residues His-566, His-570, Cys-668, and His-672 each coordinate Zn(2+).

Belongs to the class-II aminoacyl-tRNA synthetase family. Requires Zn(2+) as cofactor.

Its subcellular location is the cytoplasm. The enzyme catalyses tRNA(Ala) + L-alanine + ATP = L-alanyl-tRNA(Ala) + AMP + diphosphate. Functionally, catalyzes the attachment of alanine to tRNA(Ala) in a two-step reaction: alanine is first activated by ATP to form Ala-AMP and then transferred to the acceptor end of tRNA(Ala). Also edits incorrectly charged Ser-tRNA(Ala) and Gly-tRNA(Ala) via its editing domain. The sequence is that of Alanine--tRNA ligase from Clostridium botulinum (strain Hall / ATCC 3502 / NCTC 13319 / Type A).